We begin with the raw amino-acid sequence, 185 residues long: Homeobox protein TGIF2LY (185 aa).

Disordered regions lie at residues 1–58 (MEAA…GNLP) and 166–185 (RCQE…SSPE). Residues 21-39 (AKTQSPAQDTSIMSRNNAD) are compositionally biased toward polar residues. The homeobox; TALE-type DNA-binding region spans 48–111 (EHKKKRKGNL…INARRRILPD (64 aa)).

This sequence belongs to the TALE/TGIF homeobox family. As to expression, specifically expressed in adult testis.

The protein localises to the nucleus. Its function is as follows. May have a transcription role in testis. May act as a competitor/regulator of TGIF2LX. The protein is Homeobox protein TGIF2LY (TGIF2LY) of Homo sapiens (Human).